We begin with the raw amino-acid sequence, 100 residues long: Small ribosomal subunit protein uS14c (100 aa).

It belongs to the universal ribosomal protein uS14 family. As to quaternary structure, part of the 30S ribosomal subunit.

It localises to the plastid. Its subcellular location is the chloroplast. Its function is as follows. Binds 16S rRNA, required for the assembly of 30S particles. The polypeptide is Small ribosomal subunit protein uS14c (Barbarea verna (Land cress)).